Here is a 1712-residue protein sequence, read N- to C-terminus: MASGSRWRPTPPPLLLLLLLALAARADGLEFGGGPGQWARYARWAGAASSGELSFSLRTNATRALLLYLDDGGDCDFLELLLVDGRLRLRFTLSCAEPATLQLDTPVADDRWHMVLLTRDARRTALAVDGEARAAEVRSKRREMQVASDLFVGGIPPDVRLSALTLSTVKYEPPFRGLLANLKLGERPPALLGSQGLRGATADPLCAPARNPCANGGLCTVLAPGEVGCDCSHTGFGGKFCSEEEHPMEGPAHLTLNSEVGSLLFSEGGAGRGGAGDVHQPTKGKEEFVATFKGNEFFCYDLSHNPIQSSTDEITLAFRTLQRNGLMLHTGKSADYVNLSLKSGAVWLVINLGSGAFEALVEPVNGKFNDNAWHDVRVTRNLRQHAGIGHAMVNKLHYLVTISVDGILTTTGYTQEDYTMLGSDDFFYIGGSPNTADLPGSPVSNNFMGCLKDVVYKNNDFKLELSRLAKEGDPKMKLQGDLSFRCEDVAALDPVTFESPEAFVALPRWSAKRTGSISLDFRTTEPNGLLLFSQGRRAGGGAGSHSSAQRADYFAMELLDGHLYLLLDMGSGGIKLRASSRKVNDGEWCHVDFQRDGRKGSISVNSRSTPFLATGDSEILDLESELYLGGLPEGGRVDLPLPPEVWTAALRAGYVGCVRDLFIDGRSRDLRGLAEAQGAVGVAPFCSRETLKQCASAPCRNGGVCREGWNRFICDCIGTGFLGRVCEREATVLSYDGSMYMKIMLPNAMHTEAEDVSLRFMSQRAYGLMMATTSRESADTLRLELDGGQMKLTVNLDCLRVGCAPSKGPETLFAGHKLNDNEWHTVRVVRRGKSLQLSVDNVTVEGQMAGAHMRLEFHNIETGIMTERRFISVVPSNFIGHLSGLVFNGQPYMDQCKDGDITYCELNARFGLRAIVADPVTFKSRSSYLALATLQAYASMHLFFQFKTTAPDGLLLFNSGNGNDFIVIELVKGYIHYVFDLGNGPSLMKGNSDKPVNDNQWHNVVVSRDPGNVHTLKIDSRTVTQHSNGARNLDLKGELYIGGLSKNMFSNLPKLVASRDGFQGCLASVDLNGRLPDLIADALHRIGQVERGCDGPSTTCTEESCANQGVCLQQWDGFTCDCTMTSYGGPVCNDPGTTYIFGKGGALITYTWPPNDRPSTRMDRLAVGFSTHQRSAVLVRVDSASGLGDYLQLHIDQGTVGVIFNVGTDDITIDEPNAIVSDGKYHVVRFTRSGGNATLQVDSWPVNERYPAGNFDNERLAIARQRIPYRLGRVVDEWLLDKGRQLTIFNSQAAIKIGGRDQGRPFQGQVSGLYYNGLKVLALAAESDPNVRTEGHLRLVGEGPSVLLSAETTATTLLADMATTIMETTTTMATTTTRRGRSPTLRDSTTQNTDDLLVASAECPSDDEDLEECEPSTGGELILPIITEDSLDPPPVATRSPFVPPPPTFYPFLTGVGATQDTLPPPAARRPPSGGPCQAERDDSDCEEPIEASGFASGEVFDSSLPPTDDEDFYTTFPLVTDRTTLLSPRKPAPRPNLRTDGATGAPGVLFAPSAPAPNLPAGKMNHRDPLQPLLENPPLGPGAPTSFEPRRPPPLRPGVTSAPGFPHLPTANPTGPGERGPPGAVEVIRESSSTTGMVVGIVAAAALCILILLYAMYKYRNRDEGSYQVDQSRNYISNSAQSNGAVVKEKAPAAPKTPSKAKKNKDKEYYV.

Residues 1–28 (MASGSRWRPTPPPLLLLLLLALAARADG) form the signal peptide. A Laminin G-like 1 domain is found at 29–206 (LEFGGGPGQW…LRGATADPLC (178 aa)). At 29–1636 (LEFGGGPGQW…EVIRESSSTT (1608 aa)) the chain is on the extracellular side. The N-linked (GlcNAc...) asparagine glycan is linked to asparagine 60. Residues 202–242 (ADPLCAPARNPCANGGLCTVLAPGEVGCDCSHTGFGGKFCS) form the EGF-like 1 domain. 3 disulfides stabilise this stretch: cysteine 206-cysteine 219, cysteine 213-cysteine 229, and cysteine 231-cysteine 241. Laminin G-like domains follow at residues 289 to 486 (VATF…SFRC) and 493 to 686 (DPVT…APFC). Aspartate 335 lines the Ca(2+) pocket. An N-linked (GlcNAc...) asparagine glycan is attached at asparagine 338. 2 residues coordinate Ca(2+): leucine 352 and methionine 420. Disulfide bonds link cysteine 450-cysteine 486, cysteine 657-cysteine 686, cysteine 694-cysteine 705, cysteine 699-cysteine 714, and cysteine 716-cysteine 726. The EGF-like 2 domain maps to 690 to 727 (TLKQCASAPCRNGGVCREGWNRFICDCIGTGFLGRVCE). Laminin G-like domains are found at residues 732 to 904 (VLSY…ITYC) and 918 to 1093 (DPVT…ERGC). Positions 779 and 796 each coordinate Ca(2+). Residue asparagine 841 is glycosylated (N-linked (GlcNAc...) asparagine). Arginine 854 lines the Ca(2+) pocket. 4 disulfides stabilise this stretch: cysteine 1065–cysteine 1093, cysteine 1100–cysteine 1111, cysteine 1105–cysteine 1120, and cysteine 1122–cysteine 1132. In terms of domain architecture, EGF-like 3 spans 1096 to 1133 (PSTTCTEESCANQGVCLQQWDGFTCDCTMTSYGGPVCN). Residues 1137-1345 (TTYIFGKGGA…HLRLVGEGPS (209 aa)) form the Laminin G-like 6 domain. Residues aspartate 1189 and valine 1206 each coordinate Ca(2+). Asparagine 1236 is a glycosylation site (N-linked (GlcNAc...) asparagine). Ca(2+) contacts are provided by isoleucine 1288 and asparagine 1290. A disordered region spans residues 1373–1392 (ATTTTRRGRSPTLRDSTTQN). O-linked (Xyl...) (heparan sulfate) serine glycosylation is present at serine 1400. Disordered stretches follow at residues 1458-1489 (ATQD…CEEP) and 1525-1626 (TLLS…PGAV). A helical membrane pass occupies residues 1637 to 1657 (GMVVGIVAAAALCILILLYAM). At 1658-1712 (YKYRNRDEGSYQVDQSRNYISNSAQSNGAVVKEKAPAAPKTPSKAKKNKDKEYYV) the chain is on the cytoplasmic side. The tract at residues 1679-1712 (NSAQSNGAVVKEKAPAAPKTPSKAKKNKDKEYYV) is disordered.

Belongs to the neurexin family. In terms of assembly, the laminin G-like domain 1 binds to NXPH1. Interacts with PATJ. Interacts with CBLN1, CBLN2 and, less avidly, with CBLN4. Specific isoforms bind neuroligins NLGN1, NLGN2 and NLGN3. Specific isoforms bind to alpha-dystroglycan. Interacts (via Laminin G-like 1 domain) with IGSF21 (Ig-like 1 domain) in a trans-interaction manner. Interacts with CLSTN3. Post-translationally, O-glycosylated; contains heparan sulfate. Heparan sulfate attachment is required for synapse development by mediating interactions with neuroligins. As to expression, predominantly expressed in brain.

It localises to the presynaptic cell membrane. Functionally, neuronal cell surface protein that may be involved in cell recognition and cell adhesion. May mediate intracellular signaling. This chain is Neurexin-2 (NRXN2), found in Homo sapiens (Human).